The following is a 463-amino-acid chain: Mitochondrial dynamics protein MID49 (463 aa).

At 1–24 (MAELQIRKKEKKSGDGIGTMVDFL) the chain is on the mitochondrial intermembrane side. The chain crosses the membrane as a helical span at residues 25 to 47 (LANARLVLGVGGAAMLGIATLAV). Residues 48–463 (KRLIDRATSP…EPDDVLKRER (416 aa)) are Cytoplasmic-facing. Residues 87 to 119 (TLRRKEDLEHHCAPLSLPDPSQKMPEATGTSQV) are disordered. Over residues 89–98 (RRKEDLEHHC) the composition is skewed to basic and acidic residues.

The protein belongs to the MID49/MID51 family.

The protein localises to the mitochondrion outer membrane. In terms of biological role, mitochondrial outer membrane protein which regulates mitochondrial organization. It is required for mitochondrial fission and promotes the recruitment and association of the fission mediator dynamin-related protein 1 (DNM1L) to the mitochondrial surface independently of the mitochondrial fission FIS1 and MFF proteins. Regulates DNM1L GTPase activity. The sequence is that of Mitochondrial dynamics protein MID49 (mief2) from Xenopus laevis (African clawed frog).